The sequence spans 457 residues: MGSVTSKTNDELESFLNKRLGGSMTSSNKTVSVLLGAQWGDEGKGKIIDYLIENHKINVTARCQGGNNAGHTVVANGRKYDFHILPSGIISPTCFNVIGNGVVVNLDAFFSELAHNGILEESGWEKRIMISSEAHLVFGVHSQVDGRQEDSLAAKNKIGTTNRGIGPTYSSKCFRNGIRVADLMADFEEFSEKYRRLVEHYKKQFPSIEVNVDEELAKFKQHREKLAELKLVGDTVGFIHEQRNAGKQVLVEGANGALLDIDFGTYPYVTSSNSTVGGACTGIGVPPTAVGNVIGVVKAYQTRVGTGPFPTELFDSDGEKLQTIGKEVGVTTGRKRRCGWIDLFLLRRSAMINGYTAIALTKLDILDTFPTIKVAVGYKLNGQVLSSPPAQANAWGAIEVEYKEFEGWNEPTVGVRKFEDLPEKCRQYVKFIEDFIKVPIVYIGVGAERESLIVRQQ.

Residues 40 to 46 (GDEGKGK) and 70 to 72 (GHT) contribute to the GTP site. Asp41 (proton acceptor) is an active-site residue. 2 residues coordinate Mg(2+): Asp41 and Gly70. IMP is bound by residues 41 to 44 (DEGK), 68 to 71 (NAGH), Thr161, Arg175, Asn255, Thr270, and Arg334. The active-site Proton donor is His71. 330 to 336 (VTTGRKR) is a binding site for substrate. GTP contacts are provided by residues Arg336, 362–364 (KLD), and 444–446 (GVG).

The protein belongs to the adenylosuccinate synthetase family. As to quaternary structure, homodimer. Requires Mg(2+) as cofactor.

Its subcellular location is the cytoplasm. It catalyses the reaction IMP + L-aspartate + GTP = N(6)-(1,2-dicarboxyethyl)-AMP + GDP + phosphate + 2 H(+). It functions in the pathway purine metabolism; AMP biosynthesis via de novo pathway; AMP from IMP: step 1/2. In terms of biological role, plays an important role in the de novo pathway and in the salvage pathway of purine nucleotide biosynthesis. Catalyzes the first committed step in the biosynthesis of AMP from IMP. This chain is Adenylosuccinate synthetase, found in Caenorhabditis elegans.